We begin with the raw amino-acid sequence, 250 residues long: Glucosamine-6-phosphate deaminase (250 aa).

The Proton acceptor; for enolization step role is filled by Asp67. Asn136 acts as the For ring-opening step in catalysis. The Proton acceptor; for ring-opening step role is filled by His138. The For ring-opening step role is filled by Glu143.

Belongs to the glucosamine/galactosamine-6-phosphate isomerase family. NagB subfamily.

The enzyme catalyses alpha-D-glucosamine 6-phosphate + H2O = beta-D-fructose 6-phosphate + NH4(+). It participates in amino-sugar metabolism; N-acetylneuraminate degradation; D-fructose 6-phosphate from N-acetylneuraminate: step 5/5. Functionally, catalyzes the reversible isomerization-deamination of glucosamine 6-phosphate (GlcN6P) to form fructose 6-phosphate (Fru6P) and ammonium ion. The chain is Glucosamine-6-phosphate deaminase from Oceanobacillus iheyensis (strain DSM 14371 / CIP 107618 / JCM 11309 / KCTC 3954 / HTE831).